A 187-amino-acid chain; its full sequence is tRNA (cytidine(56)-2'-O)-methyltransferase (187 aa).

S-adenosyl-L-methionine contacts are provided by residues Leu94 and 120–124 (GAEKV).

This sequence belongs to the aTrm56 family. As to quaternary structure, homodimer.

The protein localises to the cytoplasm. It catalyses the reaction cytidine(56) in tRNA + S-adenosyl-L-methionine = 2'-O-methylcytidine(56) in tRNA + S-adenosyl-L-homocysteine + H(+). Specifically catalyzes the AdoMet-dependent 2'-O-ribose methylation of cytidine at position 56 in tRNAs. This is tRNA (cytidine(56)-2'-O)-methyltransferase from Hyperthermus butylicus (strain DSM 5456 / JCM 9403 / PLM1-5).